The following is a 761-amino-acid chain: Cyclin-D-binding Myb-like transcription factor 1 (761 aa).

The interval 1–237 (MSTVEEDSDT…TPEEIEKLKE (237 aa)) is interaction with CCND2. Residues 24–51 (DTDGNLILHCPQNDPDEVDSEDSTEPPH) are disordered. Residues 37 to 47 (DPDEVDSEDST) are compositionally biased toward acidic residues. The interval 87-170 (VTMTATTEVA…IDILMNNIER (84 aa)) is required for transcriptional activation. Residues 87–458 (VTMTATTEVA…DNTAISPSPM (372 aa)) are required for DNA-binding. The segment at 176–761 (GIKDATEIIF…KDVEDLVNCH (586 aa)) is interaction with CCND1, CCND2 and CCND3. In terms of domain architecture, Myb-like 1 spans 225 to 263 (GKYTPEEIEKLKELRIKHGNDWATIGAALGRSASSVKDR). Residues 268–333 (KDTCNTGKWT…KWLNYLNWKQ (66 aa)) form the HTH myb-type domain. Positions 306–329 (WAAVAERVGTRSEKQCRSKWLNYL) form a DNA-binding region, H-T-H motif. The 50-residue stretch at 339–388 (WTKEDEINLILRIAELDVADENDINWDLLAEGWSSVRSPQWLRSKWWTIK) folds into the Myb-like 2 domain. The interval 459 to 761 (AALQIPVQIT…KDVEDLVNCH (303 aa)) is required for transcriptional activation. Disordered stretches follow at residues 584-625 (SLSQ…MTIQ) and 740-761 (GSSLGSPVSEDSKDVEDLVNCH).

This sequence belongs to the DMTF1 family. As to quaternary structure, interacts with the D-type cyclins CCND1, CCND2 and CCND3. Interaction with D-type cyclins may modulate transcriptional activation by this protein. Phosphorylated by the cyclin-D2/CDK4, cyclin-D3/CDK4 and cyclin-D2/CDK6 complexes and to a lesser extent by the cyclin-D1/CDK4 complex. In terms of tissue distribution, ubiquitously expressed (at mRNA level). Expressed in brain, intestine, kidney, lung, pancreas, skin, spleen and tongue (at protein level). Expressed at high levels in testis and thymus (at protein level). In all tissues examined, expression is predominant in non-proliferating and differentiated cell types. These include epithelial, interstitial and smooth muscle cells of the intestine, differentiated spermatids, sperm and interstitial cells of the testis, and lymphoid cells of the medullary compartment of the thymus.

The protein localises to the nucleus. Its function is as follows. Transcriptional activator which activates the CDKN2A/ARF locus in response to Ras-Raf signaling, thereby promoting p53/TP53-dependent growth arrest. May also cooperate with MYB to activate transcription of the ANPEP gene. Binds to the consensus sequence 5'-CCCG[GT]ATGT-3'. The protein is Cyclin-D-binding Myb-like transcription factor 1 (Dmtf1) of Mus musculus (Mouse).